The following is a 632-amino-acid chain: MSEQTINNKETRGFQSEVKQLLHLMIHSLYSNKEIFLRELISNASDASDKLRFKALSNGDLYEGNADLGVKISFNVEANTLTISDNGIGMGREDVIEHLGTIAKSGTADFFSKLSEDQSKDSQLIGQFGVGFYSAFIVADAVTVRTRVAGAAKDQAVQWHSEGEGDYTIEDVTKESRGTDIILHMRDEGKEFLSEWRLKEVIGKYSDHIGIPVSIWTVEKDEEGKETEGKWEQVNKAQALWTRNKSEIEDAEYQEFYKHVSHDFADPLTWSHNKVEGKNDYTSLLYIPAKAPFDMMNRDHKSGLKLYVQRVFVMDDAEQFMPSYLRFVKGLIDSNDLALNVSREILQDNKVTQSLRGACTKRVLSMLEKIAKKDNDKYLSFWKEFGQVLKEGLAEDFANKDKIAGLLRFASTNKDSSEQAISLASYVERMKEDQDKIFYLTSDSYAAAKNSPHLEQFKSKGIEVVLMYDRIDEWLMSYLTEFDGKQFQSITKAGLDLSKFENEAEKEKQKETTEEFKSVVERTKAYLGDRVKEVRTTFKLATTPAVVVTDDFEMGTQMAKLLEAAGQAAPEVKYIFEINPEHALIKQMADEADEEAFGRWVEMLLGQAMLAERGSLDDPSQFLSAMNQLLSK.

Positions 1–343 (MSEQTINNKE…SNDLALNVSR (343 aa)) are a; substrate-binding. The interval 344 to 560 (EILQDNKVTQ…DFEMGTQMAK (217 aa)) is b. The tract at residues 561–632 (LLEAAGQAAP…LSAMNQLLSK (72 aa)) is c.

It belongs to the heat shock protein 90 family. As to quaternary structure, homodimer.

Its subcellular location is the cytoplasm. Its function is as follows. Molecular chaperone. Has ATPase activity. This chain is Chaperone protein HtpG, found in Aliivibrio salmonicida (strain LFI1238) (Vibrio salmonicida (strain LFI1238)).